The following is a 139-amino-acid chain: Protein archease (139 aa).

Residues D12, D138, and I139 each coordinate Ca(2+).

This sequence belongs to the archease family.

Activates the tRNA-splicing ligase complex by facilitating the enzymatic turnover of catalytic subunit RtcB. Acts by promoting the guanylylation of RtcB, a key intermediate step in tRNA ligation. Can also alter the NTP specificity of RtcB such that ATP, dGTP or ITP is used efficiently. The polypeptide is Protein archease (Sulfurisphaera tokodaii (strain DSM 16993 / JCM 10545 / NBRC 100140 / 7) (Sulfolobus tokodaii)).